The primary structure comprises 213 residues: Bcl-2-related ovarian killer protein (213 aa).

Ser7 carries the phosphoserine modification. Residues 15–45 (MDAFDRSPTDKELVAQAKALGREYVHARLLR) are interactions with ITPR1. Glycyl lysine isopeptide (Lys-Gly) (interchain with G-Cter in ubiquitin) cross-links involve residues Lys25 and Lys32. The BH4 signature appears at 32-44 (KALGREYVHARLL). Residues 67–83 (VCTVLLRLGDELEQIRP) carry the BH3 motif. A nuclear export signal region spans residues 71 to 79 (LLRLGDELE). The BH1 motif lies at 113-132 (HIFSAGITWGKVVSLYSVAA). Residues Lys160 and Lys177 each participate in a glycyl lysine isopeptide (Lys-Gly) (interchain with G-Cter in ubiquitin) cross-link. Residues 165–179 (WLRRRGGWTDVLKCV) carry the BH2 motif. The helical transmembrane segment at 190 to 210 (WLVATLCSFGRFLKAAFFLLL) threads the bilayer.

It belongs to the Bcl-2 family. As to quaternary structure, monomer; positively regulates apoptotic process. Homodimer. Heterodimer. Oligomer; promoted by apoptotic stimuli and BH3-only proteins; mediates constitutive activation. Interacts (via BH4 domain) with ITPR1; enhances BOK expression and stabilization; limits apoptosis and prevents ubiquitination and then degradation; protects ITPR1 from proteolysis by CASP3 during apoptosis. Interacts with ITPR2 and ITPR3; binds most strongly to ITPR2, and barely to ITPR3; regulates their expression. Interacts with XPO1; translocates to the cytoplasm. Interacts with BNIP3; promotes oligomerization. In terms of processing, ubiquitinated by AMFR/gp78 E3 ubiquitin ligase complex; mediates degradation by ubiquitin-proteasome pathway in a VCP/p97-dependent manner; prevents from proapoptotic activity; promotes degradation of newly synthesized proteins that are not ITPR1 associated. In terms of tissue distribution, widely expressed. Highly expressed in brain, kidney, and spleen.

It localises to the mitochondrion membrane. The protein resides in the endoplasmic reticulum membrane. It is found in the mitochondrion inner membrane. The protein localises to the cytoplasm. Its subcellular location is the nucleus. It localises to the mitochondrion. The protein resides in the endoplasmic reticulum. It is found in the mitochondrion outer membrane. The protein localises to the early endosome membrane. Its subcellular location is the recycling endosome membrane. It localises to the nucleus outer membrane. The protein resides in the golgi apparatus. It is found in the cis-Golgi network membrane. The protein localises to the trans-Golgi network membrane. Its subcellular location is the membrane. In terms of biological role, apoptosis regulator that functions through different apoptotic signaling pathways. Plays a roles as pro-apoptotic protein that positively regulates intrinsic apoptotic process in a BAX- and BAK1-dependent manner or in a BAX- and BAK1-independent manner. In response to endoplasmic reticulum stress promotes mitochondrial apoptosis through downstream BAX/BAK1 activation and positive regulation of PERK-mediated unfolded protein response. Activates apoptosis independently of heterodimerization with survival-promoting BCL2 and BCL2L1 through induction of mitochondrial outer membrane permeabilization, in a BAX- and BAK1-independent manner, in response to inhibition of ERAD-proteasome degradation system, resulting in cytochrome c release. In response to DNA damage, mediates intrinsic apoptotic process in a TP53-dependent manner. Plays a role in granulosa cell apoptosis by CASP3 activation. Plays a roles as anti-apoptotic protein during neuronal apoptotic process, by negatively regulating poly ADP-ribose polymerase-dependent cell death through regulation of neuronal calcium homeostasis and mitochondrial bioenergetics in response to NMDA excitation. In addition to its role in apoptosis, may regulate trophoblast cell proliferation during the early stages of placental development, by acting on G1/S transition through regulation of CCNE1 expression. May also play a role as an inducer of autophagy by disrupting interaction between MCL1 and BECN1. This is Bcl-2-related ovarian killer protein from Mus musculus (Mouse).